We begin with the raw amino-acid sequence, 213 residues long: ATP-dependent Clp protease proteolytic subunit (213 aa).

S114 acts as the Nucleophile in catalysis. H139 is an active-site residue.

It belongs to the peptidase S14 family. In terms of assembly, fourteen ClpP subunits assemble into 2 heptameric rings which stack back to back to give a disk-like structure with a central cavity, resembling the structure of eukaryotic proteasomes.

It is found in the cytoplasm. The enzyme catalyses Hydrolysis of proteins to small peptides in the presence of ATP and magnesium. alpha-casein is the usual test substrate. In the absence of ATP, only oligopeptides shorter than five residues are hydrolyzed (such as succinyl-Leu-Tyr-|-NHMec, and Leu-Tyr-Leu-|-Tyr-Trp, in which cleavage of the -Tyr-|-Leu- and -Tyr-|-Trp bonds also occurs).. In terms of biological role, cleaves peptides in various proteins in a process that requires ATP hydrolysis. Has a chymotrypsin-like activity. Plays a major role in the degradation of misfolded proteins. This Ectopseudomonas mendocina (strain ymp) (Pseudomonas mendocina) protein is ATP-dependent Clp protease proteolytic subunit.